A 335-amino-acid polypeptide reads, in one-letter code: Acetyl-coenzyme A carboxylase carboxyl transferase subunit alpha (335 aa).

Residues 40–294 (QLETLAARRR…KEAIEKHLNA (255 aa)) form the CoA carboxyltransferase C-terminal domain.

This sequence belongs to the AccA family. Acetyl-CoA carboxylase is a heterohexamer composed of biotin carboxyl carrier protein (AccB), biotin carboxylase (AccC) and two subunits each of ACCase subunit alpha (AccA) and ACCase subunit beta (AccD).

The protein localises to the cytoplasm. The catalysed reaction is N(6)-carboxybiotinyl-L-lysyl-[protein] + acetyl-CoA = N(6)-biotinyl-L-lysyl-[protein] + malonyl-CoA. Its pathway is lipid metabolism; malonyl-CoA biosynthesis; malonyl-CoA from acetyl-CoA: step 1/1. In terms of biological role, component of the acetyl coenzyme A carboxylase (ACC) complex. First, biotin carboxylase catalyzes the carboxylation of biotin on its carrier protein (BCCP) and then the CO(2) group is transferred by the carboxyltransferase to acetyl-CoA to form malonyl-CoA. The sequence is that of Acetyl-coenzyme A carboxylase carboxyl transferase subunit alpha from Prochlorococcus marinus (strain MIT 9215).